Consider the following 203-residue polypeptide: Large ribosomal subunit protein bL25 (203 aa).

The protein belongs to the bacterial ribosomal protein bL25 family. CTC subfamily. Part of the 50S ribosomal subunit; part of the 5S rRNA/L5/L18/L25 subcomplex. Contacts the 5S rRNA. Binds to the 5S rRNA independently of L5 and L18.

Functionally, this is one of the proteins that binds to the 5S RNA in the ribosome where it forms part of the central protuberance. The polypeptide is Large ribosomal subunit protein bL25 (Cupriavidus metallidurans (strain ATCC 43123 / DSM 2839 / NBRC 102507 / CH34) (Ralstonia metallidurans)).